A 224-amino-acid polypeptide reads, in one-letter code: MKNIEKLEQSLTYEFKDKNLLIHALTHKSFKKSYNNERLEFLGDAVLDLVVGEYLFHKFAKDAEGDLSKLRAALVNEKSFAKIANSLNLGDFIFMSVAEENNGGKEKPSILSDALEAIIGAIHLEAGFEFAKTIALRLIEKNFPQIDAKILIKDYKTKLQEITQGKIGQTPQYETVRAFGPDHLKQFEIALMLDGKELARAIAGSKKEAQQMAAKIALEKLGAL.

The 124-residue stretch at 4-127 (IEKLEQSLTY…IIGAIHLEAG (124 aa)) folds into the RNase III domain. Mg(2+) is bound at residue glutamate 40. The active site involves aspartate 44. Residues aspartate 113 and glutamate 116 each coordinate Mg(2+). Residue glutamate 116 is part of the active site. Residues 154–223 (DYKTKLQEIT…AKIALEKLGA (70 aa)) form the DRBM domain.

It belongs to the ribonuclease III family. As to quaternary structure, homodimer. It depends on Mg(2+) as a cofactor.

It localises to the cytoplasm. It catalyses the reaction Endonucleolytic cleavage to 5'-phosphomonoester.. Functionally, digests double-stranded RNA. Involved in the processing of primary rRNA transcript to yield the immediate precursors to the large and small rRNAs (23S and 16S). Processes some mRNAs, and tRNAs when they are encoded in the rRNA operon. Processes pre-crRNA and tracrRNA of type II CRISPR loci if present in the organism. The chain is Ribonuclease 3 from Campylobacter jejuni subsp. jejuni serotype O:6 (strain 81116 / NCTC 11828).